Reading from the N-terminus, the 297-residue chain is Tumor necrosis factor receptor superfamily member 27 (297 aa).

Topologically, residues Met-1–Thr-138 are extracellular. TNFR-Cys repeat units lie at residues Asp-2–Cys-41, Val-43–Cys-83, and Asp-85–Cys-118. 8 disulfide bridges follow: Cys-3–Cys-15, Cys-18–Cys-31, Cys-21–Cys-41, Cys-44–Cys-58, Cys-61–Cys-75, Cys-64–Cys-83, Cys-86–Cys-104, and Cys-107–Cys-118. 2 N-linked (GlcNAc...) asparagine glycosylation sites follow: Asn-74 and Asn-77. The chain crosses the membrane as a helical; Signal-anchor for type III membrane protein span at residues Leu-139–Phe-159. The Cytoplasmic segment spans residues Leu-160–Leu-297.

Associates with TRAF1, TRAF3 and TRAF6.

Its subcellular location is the membrane. In terms of biological role, receptor for EDA isoform A2, but not for EDA isoform A1. Mediates the activation of the NF-kappa-B and JNK pathways. Activation seems to be mediated by binding to TRAF3 and TRAF6. This Mus musculus (Mouse) protein is Tumor necrosis factor receptor superfamily member 27 (Eda2r).